The chain runs to 177 residues: Large ribosomal subunit protein uL6 (177 aa).

Belongs to the universal ribosomal protein uL6 family. Part of the 50S ribosomal subunit.

Functionally, this protein binds to the 23S rRNA, and is important in its secondary structure. It is located near the subunit interface in the base of the L7/L12 stalk, and near the tRNA binding site of the peptidyltransferase center. The protein is Large ribosomal subunit protein uL6 of Tolumonas auensis (strain DSM 9187 / NBRC 110442 / TA 4).